An 89-amino-acid polypeptide reads, in one-letter code: Small ribosomal subunit protein uS19 (89 aa).

This sequence belongs to the universal ribosomal protein uS19 family.

Functionally, protein S19 forms a complex with S13 that binds strongly to the 16S ribosomal RNA. The polypeptide is Small ribosomal subunit protein uS19 (Stenotrophomonas maltophilia (strain R551-3)).